The following is a 232-amino-acid chain: Octanoyltransferase (232 aa).

Residues 32–219 (DTIYDTLILL…SFMVFNFSSC (188 aa)) enclose the BPL/LPL catalytic domain. Substrate contacts are provided by residues 77 to 84 (RGGDITYH), 140 to 142 (AIG), and 153 to 155 (GFA). The active-site Acyl-thioester intermediate is Cys-171.

The protein belongs to the LipB family.

Its subcellular location is the cytoplasm. The enzyme catalyses octanoyl-[ACP] + L-lysyl-[protein] = N(6)-octanoyl-L-lysyl-[protein] + holo-[ACP] + H(+). It participates in protein modification; protein lipoylation via endogenous pathway; protein N(6)-(lipoyl)lysine from octanoyl-[acyl-carrier-protein]: step 1/2. In terms of biological role, catalyzes the transfer of endogenously produced octanoic acid from octanoyl-acyl-carrier-protein onto the lipoyl domains of lipoate-dependent enzymes. Lipoyl-ACP can also act as a substrate although octanoyl-ACP is likely to be the physiological substrate. This is Octanoyltransferase from Dictyoglomus thermophilum (strain ATCC 35947 / DSM 3960 / H-6-12).